The chain runs to 342 residues: GTP 3',8-cyclase (342 aa).

Positions 18-247 (GFSRRFYYLR…QLRGADDGPA (230 aa)) constitute a Radical SAM core domain. Arg-27 contributes to the GTP binding site. Positions 34 and 38 each coordinate [4Fe-4S] cluster. Position 40 (Tyr-40) interacts with S-adenosyl-L-methionine. Cys-41 serves as a coordination point for [4Fe-4S] cluster. Arg-81 lines the GTP pocket. Gly-85 is a binding site for S-adenosyl-L-methionine. Thr-112 serves as a coordination point for GTP. Ser-136 contacts S-adenosyl-L-methionine. GTP is bound at residue Lys-173. Met-207 contributes to the S-adenosyl-L-methionine binding site. Cys-270 and Cys-273 together coordinate [4Fe-4S] cluster. Residue 275 to 277 (RLR) coordinates GTP. Position 287 (Cys-287) interacts with [4Fe-4S] cluster.

The protein belongs to the radical SAM superfamily. MoaA family. In terms of assembly, monomer and homodimer. [4Fe-4S] cluster is required as a cofactor.

The catalysed reaction is GTP + AH2 + S-adenosyl-L-methionine = (8S)-3',8-cyclo-7,8-dihydroguanosine 5'-triphosphate + 5'-deoxyadenosine + L-methionine + A + H(+). The protein operates within cofactor biosynthesis; molybdopterin biosynthesis. Its function is as follows. Catalyzes the cyclization of GTP to (8S)-3',8-cyclo-7,8-dihydroguanosine 5'-triphosphate. In Aeromonas hydrophila subsp. hydrophila (strain ATCC 7966 / DSM 30187 / BCRC 13018 / CCUG 14551 / JCM 1027 / KCTC 2358 / NCIMB 9240 / NCTC 8049), this protein is GTP 3',8-cyclase.